Here is a 49-residue protein sequence, read N- to C-terminus: Large ribosomal subunit protein bL32 (49 aa).

The protein belongs to the bacterial ribosomal protein bL32 family.

The sequence is that of Large ribosomal subunit protein bL32 from Nitratiruptor sp. (strain SB155-2).